Reading from the N-terminus, the 306-residue chain is Pantothenate kinase (306 aa).

91–98 provides a ligand contact to ATP; the sequence is GSVAVGKS.

Belongs to the prokaryotic pantothenate kinase family.

The protein resides in the cytoplasm. The catalysed reaction is (R)-pantothenate + ATP = (R)-4'-phosphopantothenate + ADP + H(+). It functions in the pathway cofactor biosynthesis; coenzyme A biosynthesis; CoA from (R)-pantothenate: step 1/5. This chain is Pantothenate kinase, found in Streptococcus pneumoniae (strain Hungary19A-6).